Reading from the N-terminus, the 1167-residue chain is PH and Rap-GAP domain-containing protein DDB_G0271806 (1167 aa).

PH domains follow at residues 35–140 (NCVK…SSSL) and 165–257 (HVYL…SRIP). The disordered stretch occupies residues 95-160 (GIDNNNCTNS…TNANTNNGLS (66 aa)). The span at 98-155 (NNNCTNSNSNNNNNNSDLIHLSAPSLSSSTSSTISPISSSSSLTTTTTTTTTTTNANT) shows a compositional bias: low complexity. Disordered stretches follow at residues 335 to 361 (SGGG…GGSL), 376 to 400 (WRFS…STQV), and 645 to 734 (YSRS…LEPE). A compositionally biased stretch (low complexity) spans 340 to 351 (NNSSPSSLQSQQ). The span at 648 to 676 (SEPNLQSCLSSSPSTRETMVPSSPSSHQL) shows a compositional bias: polar residues. Residues 687–732 (EQQLSSSSSSSSQQLQLQLQQQEQEQLLQEQPEAEQSQPEPQPQLE) show a composition bias toward low complexity. A Rap-GAP domain is found at 950–1162 (LLSFEERQTT…RTRESLLNYY (213 aa)).

The polypeptide is PH and Rap-GAP domain-containing protein DDB_G0271806 (Dictyostelium discoideum (Social amoeba)).